Consider the following 340-residue polypeptide: Cytochrome c peroxidase, mitochondrial (340 aa).

The transit peptide at 1–17 (MRSFRAVRNFSTTAKRL) directs the protein to the mitochondrion. Residue H101 is the Proton acceptor of the active site. A disordered region spans residues 175-198 (WKRGRVDEPESASPPDGSLPDASQ). Heme b is bound at residue H224. The Tryptophan radical intermediate role is filled by W240.

Belongs to the peroxidase family. Cytochrome c peroxidase subfamily. As to quaternary structure, forms a one-to-one complex with cytochrome c. Heme b serves as cofactor.

It is found in the mitochondrion matrix. It localises to the mitochondrion intermembrane space. The catalysed reaction is 2 Fe(II)-[cytochrome c] + H2O2 + 2 H(+) = 2 Fe(III)-[cytochrome c] + 2 H2O. In terms of biological role, destroys radicals which are normally produced within the cells and which are toxic to biological systems. In Yarrowia lipolytica (strain CLIB 122 / E 150) (Yeast), this protein is Cytochrome c peroxidase, mitochondrial (CCP1).